Here is a 254-residue protein sequence, read N- to C-terminus: 4-hydroxy-tetrahydrodipicolinate reductase (254 aa).

NAD(+) contacts are provided by residues 8-13, aspartate 35, 86-88, and 110-113; these read GCSGKM, CST, and SANM. Histidine 143 acts as the Proton donor/acceptor in catalysis. Histidine 144 contacts (S)-2,3,4,5-tetrahydrodipicolinate. Lysine 147 (proton donor) is an active-site residue. (S)-2,3,4,5-tetrahydrodipicolinate is bound at residue 153–154; that stretch reads GT.

It belongs to the DapB family.

It localises to the cytoplasm. It carries out the reaction (S)-2,3,4,5-tetrahydrodipicolinate + NAD(+) + H2O = (2S,4S)-4-hydroxy-2,3,4,5-tetrahydrodipicolinate + NADH + H(+). The catalysed reaction is (S)-2,3,4,5-tetrahydrodipicolinate + NADP(+) + H2O = (2S,4S)-4-hydroxy-2,3,4,5-tetrahydrodipicolinate + NADPH + H(+). It participates in amino-acid biosynthesis; L-lysine biosynthesis via DAP pathway; (S)-tetrahydrodipicolinate from L-aspartate: step 4/4. In terms of biological role, catalyzes the conversion of 4-hydroxy-tetrahydrodipicolinate (HTPA) to tetrahydrodipicolinate. This is 4-hydroxy-tetrahydrodipicolinate reductase from Clostridium perfringens (strain 13 / Type A).